Reading from the N-terminus, the 370-residue chain is MGDRRFIDFQFQDLNSSLRPRLGNATANNTCIVDDSFKYNLNGAVYSVVFILGLITNSASLFVFCFRMKMRSETAIFITNLALSDLLFVCTLPFKIFYNFNRHWPFGDTLCKISGTAFLTNIYGSMLFLTCISVDRFLAIVYPFRSRTIRTRRNSAIVCAGVWILVLSGGISASLFSTTNVNNATTTCFEGFSKRVWKTYLSKITIFIEVVGFIIPLILNVSCSSVVLRTLRKPATLSQIGTNKKKVLKMITVHMAVFVVCFVPYNSVLFLYALVRSQAITNCLLERFAKIMYPITLCLATLNCCFDPFIYYFTLESFQKSFYINTHIRMESLFKTETPLTPKPSLPAIQEEVSDQTTNNGGELMLESTF.

Topologically, residues 1–43 (MGDRRFIDFQFQDLNSSLRPRLGNATANNTCIVDDSFKYNLNG) are extracellular. Residues N15, N24, and N28 are each glycosylated (N-linked (GlcNAc...) asparagine). The helical transmembrane segment at 44–64 (AVYSVVFILGLITNSASLFVF) threads the bilayer. Residues 65 to 73 (CFRMKMRSE) are Cytoplasmic-facing. A helical membrane pass occupies residues 74–94 (TAIFITNLALSDLLFVCTLPF). The Extracellular segment spans residues 95–112 (KIFYNFNRHWPFGDTLCK). A disulfide bridge links C111 with C188. The chain crosses the membrane as a helical span at residues 113–133 (ISGTAFLTNIYGSMLFLTCIS). The Cytoplasmic segment spans residues 134–155 (VDRFLAIVYPFRSRTIRTRRNS). The chain crosses the membrane as a helical span at residues 156–176 (AIVCAGVWILVLSGGISASLF). Residues 177–203 (STTNVNNATTTCFEGFSKRVWKTYLSK) lie on the Extracellular side of the membrane. Residue N183 is glycosylated (N-linked (GlcNAc...) asparagine). The chain crosses the membrane as a helical span at residues 204–224 (ITIFIEVVGFIIPLILNVSCS). Residues 225–254 (SVVLRTLRKPATLSQIGTNKKKVLKMITVH) are Cytoplasmic-facing. A helical transmembrane segment spans residues 255–275 (MAVFVVCFVPYNSVLFLYALV). At 276–294 (RSQAITNCLLERFAKIMYP) the chain is on the extracellular side. Residues 295–315 (ITLCLATLNCCFDPFIYYFTL) traverse the membrane as a helical segment. The Cytoplasmic portion of the chain corresponds to 316–370 (ESFQKSFYINTHIRMESLFKTETPLTPKPSLPAIQEEVSDQTTNNGGELMLESTF).

This sequence belongs to the G-protein coupled receptor 1 family.

It localises to the cell membrane. In terms of biological role, receptor for lysophosphatidic acid (LPA), a mediator of diverse cellular activities. Transduces a signal by increasing the intracellular calcium ions and by stimulating adenylyl cyclase activity. The rank order of potency for agonists of this receptor is 1-oleoyl- &gt; 1-stearoyl- &gt; 1-palmitoyl- &gt; 1-myristoyl- &gt; 1-alkyl- &gt; 1-alkenyl-LPA. This Mus musculus (Mouse) protein is Lysophosphatidic acid receptor 4 (Lpar4).